Consider the following 46-residue polypeptide: Large ribosomal subunit protein bL34 (46 aa).

The protein belongs to the bacterial ribosomal protein bL34 family.

This Synechococcus sp. (strain JA-2-3B'a(2-13)) (Cyanobacteria bacterium Yellowstone B-Prime) protein is Large ribosomal subunit protein bL34.